The primary structure comprises 635 residues: Extracellular metalloproteinase 1 (635 aa).

The first 19 residues, 1 to 19 (MHGLLLAAGLLSLPLHVLA), serve as a signal peptide directing secretion. Positions 20–246 (HPQPSTSTSL…VHNVVDYVAH (227 aa)) are excised as a propeptide. N287 is a glycosylation site (N-linked (GlcNAc...) asparagine). H430 is a binding site for Zn(2+). Residue E431 is part of the active site. Position 434 (H434) interacts with Zn(2+). N475, N594, and N623 each carry an N-linked (GlcNAc...) asparagine glycan.

This sequence belongs to the peptidase M36 family. It depends on Zn(2+) as a cofactor.

The protein resides in the secreted. Its function is as follows. Secreted metalloproteinase probably acting as a virulence factor. The chain is Extracellular metalloproteinase 1 (MEP1) from Arthroderma benhamiae (Trichophyton mentagrophytes).